A 411-amino-acid chain; its full sequence is Phosphopentomutase (411 aa).

6 residues coordinate Mn(2+): D14, D306, H311, D347, H348, and H359.

This sequence belongs to the phosphopentomutase family. The cofactor is Mn(2+).

It localises to the cytoplasm. It catalyses the reaction 2-deoxy-alpha-D-ribose 1-phosphate = 2-deoxy-D-ribose 5-phosphate. The catalysed reaction is alpha-D-ribose 1-phosphate = D-ribose 5-phosphate. The protein operates within carbohydrate degradation; 2-deoxy-D-ribose 1-phosphate degradation; D-glyceraldehyde 3-phosphate and acetaldehyde from 2-deoxy-alpha-D-ribose 1-phosphate: step 1/2. Isomerase that catalyzes the conversion of deoxy-ribose 1-phosphate (dRib-1-P) and ribose 1-phosphate (Rib-1-P) to deoxy-ribose 5-phosphate (dRib-5-P) and ribose 5-phosphate (Rib-5-P), respectively. The sequence is that of Phosphopentomutase from Lactococcus lactis subsp. cremoris (strain SK11).